The chain runs to 282 residues: MATYLIGDVHGCYDELIALLHKVEFTPGKDTLWLTGDLVARGPGSLDVLRYVKSLGDSVRLVLGNHDLHLLAVFAGISRNKPKDRLTPLLEAPDADELLNWLRRQPLLQIDEEKKLVMAHAGITPQWDLQTAKECARDVEAVLSSDSYPFFLDAMYGDMPNNWSPELRGLGRLRFITNAFTRMRFCFPNGQLDMYSKESPEEAPAPLKPWFAIPGPVAEEYSIAFGHWASLEGKGTPEGIYALDTGCCWGGSLTCLRWEDKQYFVQPSNRHKDLGEGEAVAS.

This sequence belongs to the Ap4A hydrolase family. Monomer.

It catalyses the reaction P(1),P(4)-bis(5'-adenosyl) tetraphosphate + H2O = 2 ADP + 2 H(+). Functionally, hydrolyzes diadenosine 5',5'''-P1,P4-tetraphosphate to yield ADP. The chain is Bis(5'-nucleosyl)-tetraphosphatase, symmetrical from Escherichia coli O157:H7.